The chain runs to 998 residues: SEC23-interacting protein (998 aa).

The segment at 1–363 (MADRKANGGG…YTEEFSEKLE (363 aa)) is interaction with SEC23A. Residues 50-246 (LPGEDSTDVG…AQQQVPARPA (197 aa)) form a disordered region. Positions 54–63 (DSTDVGEEDS) are enriched in acidic residues. A compositionally biased stretch (polar residues) spans 65–78 (LGQTSTHTSTPQTF). Low complexity predominate over residues 79-88 (SYFSQVSSSS). 3 stretches are compositionally biased toward polar residues: residues 94–108 (IGQS…SAGQ), 143–158 (PPSQ…SQPS), and 232–241 (AMQSPAQQQV). Ser600 is subject to Phosphoserine. In terms of domain architecture, SAM spans 640–703 (EEPLTLHGTL…NFVKLKAAKL (64 aa)). Residues 720–742 (TKGQDESAPKTKEMASPSSESNE) are disordered. Over residues 722 to 732 (GQDESAPKTKE) the composition is skewed to basic and acidic residues. 3 positions are modified to phosphoserine: Ser735, Ser748, and Ser924. Positions 777–987 (LDFEPEIFFA…ALLLLKEIYR (211 aa)) constitute a DDHD domain.

This sequence belongs to the PA-PLA1 family. In terms of assembly, interacts with SEC23A.

Its subcellular location is the cytoplasmic vesicle. The protein resides in the COPII-coated vesicle membrane. It is found in the endoplasmic reticulum. Plays a role in the organization of endoplasmic reticulum exit sites. Specifically binds to phosphatidylinositol 3-phosphate (PI(3)P), phosphatidylinositol 4-phosphate (PI(4)P) and phosphatidylinositol 5-phosphate (PI(5)P). In Mus musculus (Mouse), this protein is SEC23-interacting protein (Sec23ip).